The chain runs to 340 residues: Ketol-acid reductoisomerase (NADP(+)) (340 aa).

The KARI N-terminal Rossmann domain occupies 3-182; the sequence is VTMYYEDDVE…GCARVGIIET (180 aa). NADP(+) contacts are provided by residues 26–29, Arg49, Ser53, and 83–86; these read YGSQ and DELQ. The active site involves His108. Residue Gly134 participates in NADP(+) binding. A KARI C-terminal knotted domain is found at 183–328; sequence TFKEETEEDL…AELRKAMPFT (146 aa). 4 residues coordinate Mg(2+): Asp191, Glu195, Glu227, and Glu231. A substrate-binding site is contributed by Ser252.

Belongs to the ketol-acid reductoisomerase family. Mg(2+) serves as cofactor.

It carries out the reaction (2R)-2,3-dihydroxy-3-methylbutanoate + NADP(+) = (2S)-2-acetolactate + NADPH + H(+). It catalyses the reaction (2R,3R)-2,3-dihydroxy-3-methylpentanoate + NADP(+) = (S)-2-ethyl-2-hydroxy-3-oxobutanoate + NADPH + H(+). Its pathway is amino-acid biosynthesis; L-isoleucine biosynthesis; L-isoleucine from 2-oxobutanoate: step 2/4. It functions in the pathway amino-acid biosynthesis; L-valine biosynthesis; L-valine from pyruvate: step 2/4. Involved in the biosynthesis of branched-chain amino acids (BCAA). Catalyzes an alkyl-migration followed by a ketol-acid reduction of (S)-2-acetolactate (S2AL) to yield (R)-2,3-dihydroxy-isovalerate. In the isomerase reaction, S2AL is rearranged via a Mg-dependent methyl migration to produce 3-hydroxy-3-methyl-2-ketobutyrate (HMKB). In the reductase reaction, this 2-ketoacid undergoes a metal-dependent reduction by NADPH to yield (R)-2,3-dihydroxy-isovalerate. The polypeptide is Ketol-acid reductoisomerase (NADP(+)) (Lactococcus lactis subsp. lactis (strain IL1403) (Streptococcus lactis)).